The primary structure comprises 510 residues: ATP synthase subunit alpha, mitochondrial (510 aa).

Residue 171–178 (GDRQTGKT) coordinates ATP.

The protein belongs to the ATPase alpha/beta chains family. As to quaternary structure, F-type ATPases have 2 components, CF(1) - the catalytic core - and CF(0) - the membrane proton channel. CF(1) has five subunits: alpha(3), beta(3), gamma(1), delta(1), epsilon(1). CF(0) has three main subunits: a, b and c.

It localises to the mitochondrion. Its subcellular location is the mitochondrion inner membrane. Its function is as follows. Mitochondrial membrane ATP synthase (F(1)F(0) ATP synthase or Complex V) produces ATP from ADP in the presence of a proton gradient across the membrane which is generated by electron transport complexes of the respiratory chain. F-type ATPases consist of two structural domains, F(1) - containing the extramembraneous catalytic core, and F(0) - containing the membrane proton channel, linked together by a central stalk and a peripheral stalk. During catalysis, ATP synthesis in the catalytic domain of F(1) is coupled via a rotary mechanism of the central stalk subunits to proton translocation. Subunits alpha and beta form the catalytic core in F(1). Rotation of the central stalk against the surrounding alpha(3)beta(3) subunits leads to hydrolysis of ATP in three separate catalytic sites on the beta subunits. Subunit alpha does not bear the catalytic high-affinity ATP-binding sites. In Helianthus annuus (Common sunflower), this protein is ATP synthase subunit alpha, mitochondrial (ATPA).